Here is a 254-residue protein sequence, read N- to C-terminus: Adenosylcobinamide-GDP ribazoletransferase (254 aa).

7 helical membrane-spanning segments follow: residues 27–47 (SSLY…VLFA), 50–70 (GMGA…GFIL), 104–124 (VGSF…ICLL), 131–151 (AYGM…LLAA), 170–190 (AGWP…FVLL), 194–214 (VVPS…VGWL), and 233–253 (LVEI…FSAI).

The protein belongs to the CobS family. It depends on Mg(2+) as a cofactor.

Its subcellular location is the cell inner membrane. It carries out the reaction alpha-ribazole + adenosylcob(III)inamide-GDP = adenosylcob(III)alamin + GMP + H(+). It catalyses the reaction alpha-ribazole 5'-phosphate + adenosylcob(III)inamide-GDP = adenosylcob(III)alamin 5'-phosphate + GMP + H(+). The protein operates within cofactor biosynthesis; adenosylcobalamin biosynthesis; adenosylcobalamin from cob(II)yrinate a,c-diamide: step 7/7. Its function is as follows. Joins adenosylcobinamide-GDP and alpha-ribazole to generate adenosylcobalamin (Ado-cobalamin). Also synthesizes adenosylcobalamin 5'-phosphate from adenosylcobinamide-GDP and alpha-ribazole 5'-phosphate. In Chlorobaculum parvum (strain DSM 263 / NCIMB 8327) (Chlorobium vibrioforme subsp. thiosulfatophilum), this protein is Adenosylcobinamide-GDP ribazoletransferase.